A 287-amino-acid polypeptide reads, in one-letter code: MEVALAHPALKAFMCGSLSGTCSTLLFQPLDLVKTRLQTLQNNMHPGAPKVGMITVLFNVIRTEKLLGLWKGVSPSFMRCIPGVGIYFSTFYSLKQHYFQEGSPSAGEAVLLGAGARCVAGVAMLPFTVIKTRFESGRYNYISVAGALKSVCQNEGPKALYSGLTATLLRDAPFSGIYVMFYSQAKKALPQEISSSSIAPLVNFGCGVVAGILASLATQPADVIKTHMQVSPALYPKTSDAMRHVYVKHGLSGFFRGAVPRSLRRTLMAAMAWTVYEQLMARMGLKS.

3 Solcar repeats span residues 7–97, 104–188, and 198–282; these read HPAL…LKQH, PSAG…AKKA, and IAPL…LMAR. Transmembrane regions (helical) follow at residues 13 to 38, 72 to 98, 110 to 135, 163 to 186, 202 to 228, and 257 to 275; these read FMCGSLSGTCSTLLFQPLDLVKTRLQ, GVSPSFMRCIPGVGIYFSTFYSLKQHY, VLLGAGARCVAGVAMLPFTVIKTRFE, GLTATLLRDAPFSGIYVMFYSQAK, VNFGCGVVAGILASLATQPADVIKTHM, and GAVPRSLRRTLMAAMAWTV.

The protein belongs to the mitochondrial carrier (TC 2.A.29) family. SLC25A38 subfamily. As to expression, at 24 hours post-fertilization, expressed predominantly in posterior blood island, posterior cardinal vein and circulating blood. At 34 hours post-fertilization, becomes restricted to posterior blood island and circulating blood.

Its subcellular location is the mitochondrion inner membrane. It carries out the reaction glycine(in) = glycine(out). Functionally, mitochondrial glycine transporter that imports glycine into the mitochondrial matrix. Plays an important role in providing glycine for the first enzymatic step in heme biosynthesis, the condensation of glycine with succinyl-CoA to produce 5-aminolevulinate (ALA) in the mitochondrial matrix. Required during erythropoiesis. In terms of biological role, may play a role as pro-apoptotic protein that induces caspase-dependent apoptosis. This chain is Mitochondrial glycine transporter B (slc25a38b), found in Danio rerio (Zebrafish).